The sequence spans 1819 residues: Non-reducing polyketide synthase 8 (1819 aa).

A Starter acyltransferase (SAT) domain is found at 38–265; it reads QLTLLSKQKQ…QKIINLPVYG (228 aa). Positions 405–840 constitute a Ketosynthase family 3 (KS3) domain; it reads KSSIAIVGMS…GGNTMIAIEE (436 aa). Residues Cys-578, His-714, and His-758 each act as for beta-ketoacyl synthase activity in the active site. Positions 943-1262 constitute a Malonyl-CoA:ACP transacylase (MAT) domain; that stretch reads FAFTGQGASY…SLSTLHCAGA (320 aa). The tract at residues 1336–1476 is N-terminal hotdog fold; sequence QRIIEESFDG…GDRSAWLSSW (141 aa). The region spanning 1336-1646 is the PKS/mFAS DH domain; that stretch reads QRIIEESFDG…FRQYPRILLN (311 aa). His-1368 acts as the Proton acceptor; for dehydratase activity in catalysis. The interval 1404–1642 is dehydratase (DH) domain; that stretch reads AMNVADLEVV…GGIKFRQYPR (239 aa). The interval 1498-1646 is C-terminal hotdog fold; sequence IANRLSHNMA…FRQYPRILLN (149 aa). Asp-1557 (proton donor; for dehydratase activity) is an active-site residue. The 78-residue stretch at 1741–1818 folds into the Carrier domain; it reads VDTNSVASKA…DLRSWLMEYY (78 aa). Ser-1778 is subject to O-(pantetheine 4'-phosphoryl)serine.

Requires pantetheine 4'-phosphate as cofactor.

It functions in the pathway secondary metabolite biosynthesis. In terms of biological role, non-reducing polyketide synthase; part of the gene cluster that mediates the biosynthesis of dibenzodioxocinones such as pestalotiollide B, a novel class of inhibitors against cholesterol ester transfer protein (CEPT). The biosynthesis initiates from condensation of acetate and malonate units catalyzed by the non-reducing PKS pks8/GME11356. Pks8/GME11356 lacks a thioesterase (TE) domain, which is important to the cyclizing of the third ring of atrochrysone carboxylic acid, and the esterase GME11355 might play the role of TE and catalyzes the cyclization reaction of the C ring. The lactamase-like protein GME11357 (or other beta-lactamases in Pestalotiopsis microspora) probably hydrolyzes the thioester bond between the ACP of pks8/GME11356 and the intermediate to release atrochrysone carboxylic acid, which is spontaneously dehydrates to form endocrocin anthrone. Endocrocin anthrone is further converted to emodin via the endocrocin intermediate. Emodin is then oxidized by several enzymes such as the Baeyer-Villiger oxidase GME11358, the oxidoreductase GME11367, the short chain dehydrogenase/reductase GME11373, as well as by other oxidoreductases from the cluster, to modify the A and C rings and open the B ring, and finally yield monodictyphenone. The prenyltransferase GME11375 may catalyze the addition reaction between the C5 side chains and the carbon bone of dibenzodioxocinones. The remaining biochemical reactions to the final product dibenzodioxocinones should be methylation catalyzed by methyltransferase GME11366 and reduction and lactonization reaction catalyzed by a series of oxidordeuctases. The protein is Non-reducing polyketide synthase 8 of Pestalotiopsis microspora.